An 876-amino-acid chain; its full sequence is Beta-glucosidase 1 (876 aa).

The signal sequence occupies residues 1 to 17; it reads MLMIVQLLVFALGLAVA. N-linked (GlcNAc...) asparagine glycosylation is found at Asn-22, Asn-75, Asn-224, and Asn-267. Residue Asp-295 is part of the active site. N-linked (GlcNAc...) asparagine glycosylation is found at Asn-332, Asn-339, Asn-372, Asn-389, Asn-426, Asn-544, Asn-585, Asn-739, Asn-780, and Asn-790.

Belongs to the glycosyl hydrolase 3 family.

The catalysed reaction is Hydrolysis of terminal, non-reducing beta-D-glucosyl residues with release of beta-D-glucose.. It participates in glycan metabolism; cellulose degradation. The polypeptide is Beta-glucosidase 1 (BGL1) (Saccharomycopsis fibuligera (Yeast)).